Consider the following 786-residue polypeptide: von Willebrand factor A domain-containing protein 5A (786 aa).

The 131-residue stretch at 1–131 (MVHFCGLLTL…KAAVTLKYVQ (131 aa)) folds into the VIT domain. Positions 281–462 (EFIFLMDRSG…KALRTLKRSL (182 aa)) constitute a VWFA domain.

In terms of tissue distribution, expressed at low level in many tissues. Not expressed in 80% of tumor cell lines tested.

May play a role in tumorigenesis as a tumor suppressor. Altered expression of this protein and disruption of the molecular pathway it is involved in, may contribute directly to or modify tumorigenesis. This is von Willebrand factor A domain-containing protein 5A (VWA5A) from Homo sapiens (Human).